Here is a 70-residue protein sequence, read N- to C-terminus: Putative defensin-like protein 73 (70 aa).

Positions 1 to 29 (MNCKIEFMSFLVMTSIVILFLFVSGKVEA) are cleaved as a signal peptide. Intrachain disulfides connect Cys33-Cys68, Cys37-Cys57, Cys43-Cys66, and Cys47-Cys67.

It belongs to the DEFL family.

Its subcellular location is the secreted. In Arabidopsis thaliana (Mouse-ear cress), this protein is Putative defensin-like protein 73 (LCR44).